Consider the following 292-residue polypeptide: Ribosomal protein L11 methyltransferase (292 aa).

S-adenosyl-L-methionine-binding residues include T136, G159, D181, and N228.

This sequence belongs to the methyltransferase superfamily. PrmA family.

It is found in the cytoplasm. It catalyses the reaction L-lysyl-[protein] + 3 S-adenosyl-L-methionine = N(6),N(6),N(6)-trimethyl-L-lysyl-[protein] + 3 S-adenosyl-L-homocysteine + 3 H(+). Its function is as follows. Methylates ribosomal protein L11. This Rhizobium etli (strain CIAT 652) protein is Ribosomal protein L11 methyltransferase.